We begin with the raw amino-acid sequence, 98 residues long: N(2)-fixation sustaining protein CowN (98 aa).

The protein belongs to the CowN family.

In terms of biological role, is required to sustain N(2)-dependent growth in the presence of low levels of carbon monoxide (CO). Probably acts by protecting the N(2) fixation ability of the nitrogenase complex, which is inactivated in the presence of CO. The polypeptide is N(2)-fixation sustaining protein CowN (Azospirillum sp. (strain B510)).